A 136-amino-acid chain; its full sequence is HTH-type transcriptional regulator LrpA (136 aa).

An HTH asnC-type domain is found at 2–63 (IDEIDKKILD…EVNQVKLGFS (62 aa)). Residues 21-40 (MKKLGEKVHLTAPATASRVV) constitute a DNA-binding region (H-T-H motif).

Functionally, negative regulation of glyA transcription and kinB-dependent sporulation. The chain is HTH-type transcriptional regulator LrpA (lrpA) from Bacillus subtilis (strain 168).